The chain runs to 282 residues: Trihydroxynaphthalene reductase PfmaI (282 aa).

NADP(+) contacts are provided by isoleucine 41, asparagine 114, and arginine 147. Active-site proton donor residues include serine 164 and tyrosine 178. NADP(+) is bound by residues tyrosine 178, lysine 182, isoleucine 211, and threonine 213. The active-site Lowers pKa of active site Tyr is lysine 182.

It belongs to the short-chain dehydrogenases/reductases (SDR) family.

It functions in the pathway pigment biosynthesis; melanin biosynthesis. In terms of biological role, trihydroxynaphthalene reductase involved the biosynthesis of dihydroxynaphthalene (DHN)-melanin, a bluish-green pigment forming a dark layer in the conidial wall that protects the conidia from UV radiations. The first step of the pathway is the production of the pentaketide 1,3,6,8-tetrahydroxynaphthalene (1,3,6,8-THN or T4HN) by the polyketide synthase PfmaE though condensation of acetyl-CoA with malonyl-CoA. T4HN is not stable and easily oxidizes into the stable form flaviolin. T4HN is also substrate of the hydroxynaphthalene reductase PfmaG to yield scytalone. The scytalone dehydratase PfmaJ then reduces scytalone to 1,3,8-THN. 1,3,8-THN is then substrate of the hydroxynaphthalene reductase PfmaI to yield vermelone. Vermelone is further converted by the multicopper oxidase PfmaD to 1,8-DHN. Finally the laccase PFICI_06862 transforms 1,8-DHN to DHN-melanin. The roles of the 5-oxoprolinase PfmaA and the proline iminopeptidase PfmaB within the cluster have not been elucidated yet. This is Trihydroxynaphthalene reductase PfmaI from Pestalotiopsis fici (strain W106-1 / CGMCC3.15140).